The chain runs to 156 residues: MENSQSQGKNKKKRLTQDQVRQLEKCFTMNKKLEPDLKLQLSNQLGLPQRQVAVWFQNKRARFKTQSLEVQHCTLQSKHEAALSDKAKLEHQVQFLQDELKRARNQLALFTNQDSPVDNSNLGSCDEDHDDQVVVFDELYACFVSNGHGSSSTSWV.

Residues 8–67 constitute a DNA-binding region (homeobox); that stretch reads GKNKKKRLTQDQVRQLEKCFTMNKKLEPDLKLQLSNQLGLPQRQVAVWFQNKRARFKTQS. Positions 68–96 are leucine-zipper; sequence LEVQHCTLQSKHEAALSDKAKLEHQVQFL.

The protein belongs to the HD-ZIP homeobox family. Class I subfamily. Expressed in roots and flowers.

The protein resides in the nucleus. Functionally, probable transcription factor. This is Homeobox-leucine zipper protein ATHB-52 (ATHB-52) from Arabidopsis thaliana (Mouse-ear cress).